A 172-amino-acid polypeptide reads, in one-letter code: R-phycocyanin-2 beta chain (172 aa).

Position 72 is an N4-methylasparagine (N72). Position 82 (C82) interacts with (2R,3E)-phycocyanobilin. A (2R,3E)-phycoerythrobilin-binding site is contributed by C153.

This sequence belongs to the phycobiliprotein family. As to quaternary structure, heterodimer of an alpha and a beta chain. In terms of processing, contains two covalently linked bilin chromophores.

It localises to the cellular thylakoid membrane. Light-harvesting photosynthetic bile pigment-protein from the phycobiliprotein complex. The protein is R-phycocyanin-2 beta chain (rpcB) of Synechococcus sp. (strain WH8020).